A 483-amino-acid chain; its full sequence is MKTLNRRDFPGAQYPERIIQFGEGNFLRAFVDWQIDLLNEHTDLNSGVVVVRPIETSFPPSLSTQDGLYTTIIRGLNEKGEAVSDARLIRSVNREISVYSEYDEFLKLAHNPEMRFVFSNTTEAGISYHAGDKFDDAPAVSYPAKLTRLLFERFSHFNGALDKGWIIIPCELIDYNGDALRELVLRYAQEWALPEAFIQWLDQANSFCSTLVDRIVTGYPRDEVAKLEEELGYHDGFLDTAEYFYLFVIQGPKSLATELRLDKYPLNVLIVDDIKPYKERKVAILNGAHTALVPVAFQAGLDTVGEAMNDAEICAFVEKAIYEEIIPVLDLPRDELESFASAVTGRFRNPYIKHQLLSIALNGMTKFRTRILPQLLAGQKANGTLPARLTFALAALIAFYRGERNGETYPVQDDAHWLERYQQLWSQYRDRVIGTQELVAIVLAEKDHWEQDLTQVPGLVEQVANDLDAILEKGMREAVRPLC.

18-29 (IIQFGEGNFLRA) contacts NAD(+).

It belongs to the mannitol dehydrogenase family. UxaB subfamily.

The enzyme catalyses D-altronate + NAD(+) = keto-D-tagaturonate + NADH + H(+). It functions in the pathway carbohydrate metabolism; pentose and glucuronate interconversion. In Escherichia coli O6:K15:H31 (strain 536 / UPEC), this protein is Altronate oxidoreductase.